Reading from the N-terminus, the 259-residue chain is MLLCIDCGNTNTVFSIWDGESWLCTMRTSTHHSRTADAYFTWFSTLLGHYGIDPQIDDVIISSTVPRVVFNLRVFCDRFFNLRPLVVGKPDCALPMEPRVDFGTGVGPDRLANAVGAFARHGGDCVVVDFGTATNFDVVAEDGAYVGGVIAPGVNLSLEALALGAAALPHVDITKPDAVIGTNTVACIQSGVFWGYVGLIEGITTRIKAEYGKPMKVIGTGGLAPLFAQGEVLFDTVEDDLTMYGLTVIHKYNKDKNPS.

An ATP-binding site is contributed by 6 to 13; it reads DCGNTNTV. 107 to 110 serves as a coordination point for substrate; it reads GPDR. Residue D109 is the Proton acceptor of the active site. K(+) is bound at residue D129. T132 serves as a coordination point for ATP. Residue T184 coordinates substrate.

The protein belongs to the type III pantothenate kinase family. Homodimer. Requires NH4(+) as cofactor. K(+) is required as a cofactor.

Its subcellular location is the cytoplasm. The enzyme catalyses (R)-pantothenate + ATP = (R)-4'-phosphopantothenate + ADP + H(+). It participates in cofactor biosynthesis; coenzyme A biosynthesis; CoA from (R)-pantothenate: step 1/5. Functionally, catalyzes the phosphorylation of pantothenate (Pan), the first step in CoA biosynthesis. This chain is Type III pantothenate kinase, found in Jannaschia sp. (strain CCS1).